Consider the following 323-residue polypeptide: Homocysteine S-methyltransferase 1 (323 aa).

One can recognise a Hcy-binding domain in the interval 3–317; it reads VLEDLVARAG…STIRAVSKIL (315 aa). Zn(2+) contacts are provided by Cys-235, Cys-302, and Cys-303.

As to quaternary structure, monomer. Zn(2+) is required as a cofactor.

The catalysed reaction is S-methyl-L-methionine + L-homocysteine = 2 L-methionine + H(+). Functionally, catalyzes methyl transfer from S-methylmethionine (SMM) to adenosyl-L-homocysteine (AdoMet). SMM degradation (by HMT-1, HMT-2, HMT-3 and HMT-4) and biosynthesis (by MMT1) constitute the SMM cycle in plants, which is probably required to achieve short term control of AdoMet level. The protein is Homocysteine S-methyltransferase 1 (HMT-1) of Zea mays (Maize).